Reading from the N-terminus, the 529-residue chain is Bifunctional purine biosynthesis protein PurH (529 aa).

One can recognise an MGS-like domain in the interval 1 to 148 (MQQRRPIRRA…KNHKDVAIVV (148 aa)). Position 287 is an N6-acetyllysine (lysine 287).

This sequence belongs to the PurH family.

It carries out the reaction (6R)-10-formyltetrahydrofolate + 5-amino-1-(5-phospho-beta-D-ribosyl)imidazole-4-carboxamide = 5-formamido-1-(5-phospho-D-ribosyl)imidazole-4-carboxamide + (6S)-5,6,7,8-tetrahydrofolate. It catalyses the reaction IMP + H2O = 5-formamido-1-(5-phospho-D-ribosyl)imidazole-4-carboxamide. It participates in purine metabolism; IMP biosynthesis via de novo pathway; 5-formamido-1-(5-phospho-D-ribosyl)imidazole-4-carboxamide from 5-amino-1-(5-phospho-D-ribosyl)imidazole-4-carboxamide (10-formyl THF route): step 1/1. It functions in the pathway purine metabolism; IMP biosynthesis via de novo pathway; IMP from 5-formamido-1-(5-phospho-D-ribosyl)imidazole-4-carboxamide: step 1/1. The polypeptide is Bifunctional purine biosynthesis protein PurH (Escherichia coli O139:H28 (strain E24377A / ETEC)).